The following is a 467-amino-acid chain: Gamma-aminobutyric acid receptor subunit gamma-2 (467 aa).

The N-terminal stretch at 1 to 39 (MSSPNIWSTGSSVYSTPVFSQKMTVWILLLLSLYPGFTS) is a signal peptide. At 40-275 (QKSDDDYEDY…FDLSRRMGYF (236 aa)) the chain is on the extracellular side. Residues asparagine 52 and asparagine 129 are each glycosylated (N-linked (GlcNAc...) asparagine). A disulfide bond links cysteine 190 and cysteine 204. Asparagine 247 carries an N-linked (GlcNAc...) asparagine glycan. The helical transmembrane segment at 276–296 (TIQTYIPCTLIVVLSWVSFWI) threads the bilayer. Topologically, residues 297–302 (NKDAVP) are cytoplasmic. The helical transmembrane segment at 303–322 (ARTSLGITTVLTMTTLSTIA) threads the bilayer. Over 323-334 (RKSLPKVSYVTA) the chain is Extracellular. Residues 335-359 (MDLFVSVCFIFVFSALVEYGTLHYF) traverse the membrane as a helical segment. Residues 360-443 (VSNRKPSKDK…IHIRIAKMDS (84 aa)) are Cytoplasmic-facing. The segment at 425–442 (RTGAWRHGRIHIRIAKMD) is interaction with GABARAP. Residues 444–464 (YARIFFPTAFCLFNLVYWVSY) form a helical membrane-spanning segment. Residues 465–467 (LYL) lie on the Extracellular side of the membrane.

This sequence belongs to the ligand-gated ion channel (TC 1.A.9) family. Gamma-aminobutyric acid receptor (TC 1.A.9.5) subfamily. GABRG2 sub-subfamily. In terms of assembly, heteropentamer, formed by a combination of alpha (GABRA1-6), beta (GABRB1-3), gamma (GABRG1-3), delta (GABRD), epsilon (GABRE), rho (GABRR1-3), pi (GABRP) and theta (GABRQ) chains, each subunit exhibiting distinct physiological and pharmacological properties. Interacts with GABARAP. Interacts with KIF21B. Identified in a complex of 720 kDa composed of LHFPL4, NLGN2, GABRA1, GABRB2, GABRG2 and GABRB3. Interacts with LHFPL4. Interacts with SHISA7; interaction leads to the regulation of GABA(A) receptor trafficking, channel deactivation kinetics and pharmacology. Post-translationally, palmitoylated by ZDHHC3/GODZ; required for the accumulation of GABA(A) receptors at the postsynaptic membrane of inhibitory GABAergic synapses. In terms of processing, glycosylated.

It localises to the postsynaptic cell membrane. It is found in the cell membrane. Its subcellular location is the cell projection. The protein resides in the dendrite. The protein localises to the cytoplasmic vesicle membrane. The enzyme catalyses chloride(in) = chloride(out). Allosterically activated by benzodiazepines. Activated by pentobarbital. Inhibited by the antagonist bicuculline. Inhibited by zinc ions. Potentiated by histamine. Gamma subunit of the heteropentameric ligand-gated chloride channel gated by gamma-aminobutyric acid (GABA), a major inhibitory neurotransmitter in the brain. GABA-gated chloride channels, also named GABA(A) receptors (GABAAR), consist of five subunits arranged around a central pore and contain GABA active binding site(s) located at the alpha and beta subunit interface(s). When activated by GABA, GABAARs selectively allow the flow of chloride anions across the cell membrane down their electrochemical gradient. Gamma-2/GABRG2-containing GABAARs are found at both synaptic and extrasynaptic sites. Chloride influx into the postsynaptic neuron following GABAAR opening decreases the neuron ability to generate a new action potential, thereby reducing nerve transmission. GABAARs containing alpha-1 and beta-2 or -3 subunits exhibit synaptogenic activity; the gamma-2 subunit being necessary but not sufficient to induce rapid synaptic contacts formation. Extrasynaptic gamma-2-containing receptors contribute to the tonic GABAergic inhibition. GABAARs function also as histamine receptor where histamine binds at the interface of two neighboring beta subunits and potentiates GABA response in a gamma-2 subunit-controlled manner. The sequence is that of Gamma-aminobutyric acid receptor subunit gamma-2 (GABRG2) from Pongo abelii (Sumatran orangutan).